A 236-amino-acid polypeptide reads, in one-letter code: Biosynthetic peptidoglycan transglycosylase (236 aa).

The chain crosses the membrane as a helical span at residues 12–31 (ALLWFVAGSIVLVLVFRWVP).

The protein belongs to the glycosyltransferase 51 family.

The protein localises to the cell inner membrane. It carries out the reaction [GlcNAc-(1-&gt;4)-Mur2Ac(oyl-L-Ala-gamma-D-Glu-L-Lys-D-Ala-D-Ala)](n)-di-trans,octa-cis-undecaprenyl diphosphate + beta-D-GlcNAc-(1-&gt;4)-Mur2Ac(oyl-L-Ala-gamma-D-Glu-L-Lys-D-Ala-D-Ala)-di-trans,octa-cis-undecaprenyl diphosphate = [GlcNAc-(1-&gt;4)-Mur2Ac(oyl-L-Ala-gamma-D-Glu-L-Lys-D-Ala-D-Ala)](n+1)-di-trans,octa-cis-undecaprenyl diphosphate + di-trans,octa-cis-undecaprenyl diphosphate + H(+). Its pathway is cell wall biogenesis; peptidoglycan biosynthesis. Peptidoglycan polymerase that catalyzes glycan chain elongation from lipid-linked precursors. This is Biosynthetic peptidoglycan transglycosylase from Pseudomonas putida (strain ATCC 700007 / DSM 6899 / JCM 31910 / BCRC 17059 / LMG 24140 / F1).